A 241-amino-acid chain; its full sequence is Adenosylcobinamide-GDP ribazoletransferase (241 aa).

The next 5 helical transmembrane spans lie at 24 to 44 (IVFF…SIFY), 48 to 68 (FINQ…IYGF), 103 to 123 (VVTF…FNSI), 175 to 195 (VIIL…FSLI), and 218 to 238 (IIGF…LISF).

It belongs to the CobS family. Mg(2+) is required as a cofactor.

Its subcellular location is the cell membrane. It carries out the reaction alpha-ribazole + adenosylcob(III)inamide-GDP = adenosylcob(III)alamin + GMP + H(+). The enzyme catalyses alpha-ribazole 5'-phosphate + adenosylcob(III)inamide-GDP = adenosylcob(III)alamin 5'-phosphate + GMP + H(+). The protein operates within cofactor biosynthesis; adenosylcobalamin biosynthesis; adenosylcobalamin from cob(II)yrinate a,c-diamide: step 7/7. In terms of biological role, joins adenosylcobinamide-GDP and alpha-ribazole to generate adenosylcobalamin (Ado-cobalamin). Also synthesizes adenosylcobalamin 5'-phosphate from adenosylcobinamide-GDP and alpha-ribazole 5'-phosphate. In Picrophilus torridus (strain ATCC 700027 / DSM 9790 / JCM 10055 / NBRC 100828 / KAW 2/3), this protein is Adenosylcobinamide-GDP ribazoletransferase.